A 154-amino-acid polypeptide reads, in one-letter code: UPF0178 protein in pahZ1 5'region (154 aa).

This sequence belongs to the UPF0178 family.

This is UPF0178 protein in pahZ1 5'region from Paucimonas lemoignei (Pseudomonas lemoignei).